Consider the following 402-residue polypeptide: DNA primase DnaG (402 aa).

The Toprim domain occupies 165-243 (PNLIIVEGRA…KIDFVARAPV (79 aa)). Glu171, Asp216, and Asp218 together coordinate Mg(2+).

This sequence belongs to the archaeal DnaG primase family. Forms a ternary complex with MCM helicase and DNA. Component of the archaeal exosome complex. Requires Mg(2+) as cofactor.

The catalysed reaction is ssDNA + n NTP = ssDNA/pppN(pN)n-1 hybrid + (n-1) diphosphate.. Functionally, RNA polymerase that catalyzes the synthesis of short RNA molecules used as primers for DNA polymerase during DNA replication. Also part of the exosome, which is a complex involved in RNA degradation. Acts as a poly(A)-binding protein that enhances the interaction between heteromeric, adenine-rich transcripts and the exosome. This chain is DNA primase DnaG, found in Saccharolobus islandicus (strain Y.N.15.51 / Yellowstone #2) (Sulfolobus islandicus).